The primary structure comprises 232 residues: 7-cyano-7-deazaguanine synthase (232 aa).

8–18 contacts ATP; sequence FSGGQDSTTCL. Cysteine 188, cysteine 197, cysteine 200, and cysteine 203 together coordinate Zn(2+).

This sequence belongs to the QueC family. Requires Zn(2+) as cofactor.

The enzyme catalyses 7-carboxy-7-deazaguanine + NH4(+) + ATP = 7-cyano-7-deazaguanine + ADP + phosphate + H2O + H(+). It functions in the pathway purine metabolism; 7-cyano-7-deazaguanine biosynthesis. In terms of biological role, catalyzes the ATP-dependent conversion of 7-carboxy-7-deazaguanine (CDG) to 7-cyano-7-deazaguanine (preQ(0)). This is 7-cyano-7-deazaguanine synthase from Buchnera aphidicola subsp. Schizaphis graminum (strain Sg).